Consider the following 508-residue polypeptide: Erythropoietin receptor (508 aa).

The N-terminal stretch at 1-24 is a signal peptide; it reads MDHLGASLWPQVGSLCLLLAGAAW. Topologically, residues 25-250 are extracellular; sequence APPPNLPDPK…SLLTPSDLDP (226 aa). A disulfide bridge links C52 with C62. N76 carries an N-linked (GlcNAc...) asparagine glycan. C91 and C107 are disulfide-bonded. The Fibronectin type-III domain maps to 147–247; it reads APVGLVARLA…EPVSLLTPSD (101 aa). The WSXWS motif motif lies at 233-237; that stretch reads WSAWS. The helical transmembrane segment at 251-273 threads the bilayer; that stretch reads LILTLSLILVVILVLLTVLALLS. Topologically, residues 274 to 508 are cytoplasmic; it reads HRRALKQKIW…PLPPSYVACS (235 aa). K281 is covalently cross-linked (Glycyl lysine isopeptide (Lys-Gly) (interchain with G-Cter in ubiquitin)). Residues 282–290 carry the Box 1 motif motif; the sequence is IWPGIPSPE. Phosphotyrosine; by JAK2 occurs at positions 368 and 426. The short motif at 452-457 is the ITIM motif element; that stretch reads LKYLYL. A Glycyl lysine isopeptide (Lys-Gly) (interchain with G-Cter in ubiquitin) cross-link involves residue K453. Phosphotyrosine; by JAK2 is present on residues Y454, Y456, Y468, Y485, Y489, and Y504. Residues 454 to 456 are required for high-affinity SOCS3 binding; sequence YLY. Positions 467 to 494 are disordered; that stretch reads DYSSGDSQGAQGGLSDGPYSNPYENSLI.

This sequence belongs to the type I cytokine receptor family. Type 1 subfamily. Forms homodimers on EPO stimulation. The tyrosine-phosphorylated form interacts with several SH2 domain-containing proteins including LYN, the adapter protein SH2B2, PTPN6, PTPN11, JAK2, PI3 kinases, STAT5A/B, SOCS3, CRKL. Interacts with INPP5D/SHIP1. SH2B2 binding inhibits the JAK-STAT signaling. Interacts with RHEX; this interaction occurs in a erythropoietin (EPO)-dependent manner. Interacts with ATXN2L. In terms of processing, on EPO stimulation, phosphorylated on C-terminal tyrosine residues by JAK2. The phosphotyrosine motifs are also recruitment sites for several SH2-containing proteins and adapter proteins which mediate cell proliferation. Phosphorylation on Tyr-454 is required for PTPN6 interaction, Tyr-426 for PTPN11. Tyr-426 is also required for SOCS3 binding, but Tyr-454/Tyr-456 motif is the preferred binding site. Ubiquitinated by the ECS(SOCS2) complex following ligand-binding and phosphorylation by JAK2, leading to its degradation by the proteasome. Regulation by the ECS(SOCS2) complex acts as a negative feedback loop of erythropoietin-mediated signaling pathway. Ubiquitination at Lys-281 mediates receptor internalization, whereas ubiquitination at Lys-453 promotes trafficking of activated receptors to the lysosomes for degradation. Ubiquitinated by NOSIP; appears to be either multi-monoubiquitinated or polyubiquitinated. Ubiquitination mediates proliferation and survival of EPO-dependent cells. In terms of tissue distribution, erythroid cells and erythroid progenitor cells. As to expression, isoform EPOR-F is the most abundant form in EPO-dependent erythroleukemia cells and in late-stage erythroid progenitors. Isoform EPOR-S and isoform EPOR-T are the predominant forms in bone marrow. In terms of tissue distribution, isoform EPOR-S and isoform EPOR-T are the predominant forms in bone marrow. Isoform EPOR-T is the most abundant from in early-stage erythroid progenitor cells.

It is found in the cell membrane. It localises to the secreted. Receptor for erythropoietin, which mediates erythropoietin-induced erythroblast proliferation and differentiation. Upon EPO stimulation, EPOR dimerizes triggering the JAK2/STAT5 signaling cascade. In some cell types, can also activate STAT1 and STAT3. May also activate the LYN tyrosine kinase. Its function is as follows. Acts as a dominant-negative receptor of EPOR-mediated signaling. The chain is Erythropoietin receptor from Homo sapiens (Human).